Consider the following 151-residue polypeptide: Ribosome maturation factor RimP (151 aa).

Belongs to the RimP family.

It localises to the cytoplasm. Its function is as follows. Required for maturation of 30S ribosomal subunits. The sequence is that of Ribosome maturation factor RimP from Pseudoalteromonas translucida (strain TAC 125).